We begin with the raw amino-acid sequence, 480 residues long: MKHLVAAWLLVGLSLGVPQFGKGDICNPNPCENGGICLSGLADDSFSCECPEGFAGPNCSSVVEVASDEEKPTSAGPCIPNPCHNGGTCEISEAYRGDTFIGYVCKCPRGFNGIHCQHNINECEAEPCRNGGICTDLVANYSCECPGEFMGRNCQYKCSGPLGIEGGIISNQQITASSTHRALFGLQKWYPYYARLNKKGLINAWTAAENDRWPWIQINLQRKMRVTGVITQGAKRIGSPEYIKSYKIAYSNDGKTWAMYKVKGTNEEMVFRGNVDNNTPYANSFTPPIKAQYVRLYPQICRRHCTLRMELLGCELSGCSEPLGMKSGHIQDYQITASSVFRTLNMDMFTWEPRKARLDKQGKVNAWTSGHNDQSQWLQVDLLVPTKVTGIITQGAKDFGHVQFVGSYKLAYSNDGEHWMVHQDEKQRKDKVFQGNFDNDTHRKNVIDPPIYARFIRILPWSWYGRITLRSELLGCAEEE.

The signal sequence occupies residues 1–23 (MKHLVAAWLLVGLSLGVPQFGKG). Residues 24–60 (DICNPNPCENGGICLSGLADDSFSCECPEGFAGPNCS) form the EGF-like 1 domain. Cystine bridges form between C26–C37, C31–C48, and C50–C59. An O-linked (GalNAc...) threonine glycan is attached at T73. 2 EGF-like domains span residues 74–117 (SAGP…IHCQ) and 119–155 (NINECEAEPCRNGGICTDLVANYSCECPGEFMGRNCQ). 3 disulfides stabilise this stretch: C78–C89, C83–C105, and C107–C116. O-linked (Fuc...) threonine glycosylation occurs at T88. The Cell attachment site motif lies at 96 to 98 (RGD). The Ca(2+) site is built by N119, I120, and E122. 6 cysteine pairs are disulfide-bonded: C123-C134, C128-C143, C145-C154, C158-C314, C301-C305, and C319-C476. Ca(2+) is bound by residues D136 and L137. Residue N140 is glycosylated (N-linked (GlcNAc...) asparagine). F5/8 type C domains lie at 158 to 314 (CSGP…LLGC) and 319 to 476 (CSEP…LLGC).

Expressed in angioblasts and early endothelial cells. By embryonic day 13.5, also expressed in a restricted group of non-endothelial cells including chondrocytes and retinal neurons.

The protein localises to the secreted. Functionally, promotes adhesion of endothelial cells through interaction with the alpha-v/beta-3 integrin receptor. Inhibits formation of vascular-like structures. May be involved in regulation of vascular morphogenesis of remodeling in embryonic development. The protein is EGF-like repeat and discoidin I-like domain-containing protein 3 (Edil3) of Mus musculus (Mouse).